A 343-amino-acid polypeptide reads, in one-letter code: Homeobox protein Hox-D13 (343 aa).

Disordered regions lie at residues 1-28 (MSRAGSWDMDGLRADGGGAGGAPASSSS) and 78-115 (GTSERTGSSSSSSSSAVVAARPEAPPAKECPAPTPAAA). Residues 85-115 (SSSSSSSSAVVAARPEAPPAKECPAPTPAAA) show a composition bias toward low complexity. The segment at residues 276 to 335 (GRKKRVPYTKLQLKELENEYAINKFINKDKRRRISAATNLSERQVTIWFQNRRVKDKKIV) is a DNA-binding region (homeobox).

It belongs to the Abd-B homeobox family.

Its subcellular location is the nucleus. In terms of biological role, sequence-specific transcription factor that binds gene promoters and activates their transcription. Part of a developmental regulatory system that provides cells with specific positional identities on the anterior-posterior axis. This is Homeobox protein Hox-D13 (HOXD13) from Homo sapiens (Human).